We begin with the raw amino-acid sequence, 214 residues long: Redox-sensing transcriptional repressor Rex (214 aa).

The H-T-H motif DNA-binding region spans 16-55; it reads IYFRYLNVLKDANKQRVSSTELSEAVQVDSATIRRDFSYF. 90–95 is a binding site for NAD(+); it reads GVGSLG.

The protein belongs to the transcriptional regulatory Rex family. Homodimer.

Its subcellular location is the cytoplasm. Functionally, modulates transcription in response to changes in cellular NADH/NAD(+) redox state. The sequence is that of Redox-sensing transcriptional repressor Rex from Limosilactobacillus reuteri (strain DSM 20016) (Lactobacillus reuteri).